A 223-amino-acid chain; its full sequence is Serine/threonine/tyrosine-interacting protein B (223 aa).

Residues glutamate 28–alanine 176 form the Tyrosine-protein phosphatase domain.

Belongs to the protein-tyrosine phosphatase family. Non-receptor class subfamily.

Catalytically inactive phosphatase. This is Serine/threonine/tyrosine-interacting protein B (styx-b) from Xenopus laevis (African clawed frog).